A 950-amino-acid chain; its full sequence is uncharacterized protein (950 aa).

This is an uncharacterized protein from Rickettsia prowazekii (strain Madrid E).